A 451-amino-acid polypeptide reads, in one-letter code: UPF0210 protein CA_C0479 (451 aa).

It belongs to the UPF0210 family. As to quaternary structure, homodimer.

The sequence is that of UPF0210 protein CA_C0479 from Clostridium acetobutylicum (strain ATCC 824 / DSM 792 / JCM 1419 / IAM 19013 / LMG 5710 / NBRC 13948 / NRRL B-527 / VKM B-1787 / 2291 / W).